We begin with the raw amino-acid sequence, 292 residues long: Elongation factor Ts (292 aa).

The segment at 79–82 (TDFV) is involved in Mg(2+) ion dislocation from EF-Tu.

It belongs to the EF-Ts family.

It localises to the cytoplasm. Functionally, associates with the EF-Tu.GDP complex and induces the exchange of GDP to GTP. It remains bound to the aminoacyl-tRNA.EF-Tu.GTP complex up to the GTP hydrolysis stage on the ribosome. The protein is Elongation factor Ts of Xylella fastidiosa (strain 9a5c).